Reading from the N-terminus, the 434-residue chain is Methylenetetrahydrofolate--tRNA-(uracil-5-)-methyltransferase TrmFO (434 aa).

8–13 (GAGLAG) provides a ligand contact to FAD.

It belongs to the MnmG family. TrmFO subfamily. FAD is required as a cofactor.

It is found in the cytoplasm. The enzyme catalyses uridine(54) in tRNA + (6R)-5,10-methylene-5,6,7,8-tetrahydrofolate + NADH + H(+) = 5-methyluridine(54) in tRNA + (6S)-5,6,7,8-tetrahydrofolate + NAD(+). It catalyses the reaction uridine(54) in tRNA + (6R)-5,10-methylene-5,6,7,8-tetrahydrofolate + NADPH + H(+) = 5-methyluridine(54) in tRNA + (6S)-5,6,7,8-tetrahydrofolate + NADP(+). In terms of biological role, catalyzes the folate-dependent formation of 5-methyl-uridine at position 54 (M-5-U54) in all tRNAs. The chain is Methylenetetrahydrofolate--tRNA-(uracil-5-)-methyltransferase TrmFO from Exiguobacterium sibiricum (strain DSM 17290 / CCUG 55495 / CIP 109462 / JCM 13490 / 255-15).